We begin with the raw amino-acid sequence, 229 residues long: DNA repair protein RecO (229 aa).

It belongs to the RecO family.

Functionally, involved in DNA repair and RecF pathway recombination. This chain is DNA repair protein RecO, found in Legionella pneumophila (strain Paris).